We begin with the raw amino-acid sequence, 585 residues long: Arginine--tRNA ligase (585 aa).

The short motif at A131–H141 is the 'HIGH' region element.

It belongs to the class-I aminoacyl-tRNA synthetase family. As to quaternary structure, monomer.

Its subcellular location is the cytoplasm. The catalysed reaction is tRNA(Arg) + L-arginine + ATP = L-arginyl-tRNA(Arg) + AMP + diphosphate. The sequence is that of Arginine--tRNA ligase from Bartonella bacilliformis (strain ATCC 35685 / KC583 / Herrer 020/F12,63).